The following is a 341-amino-acid chain: Glyceraldehyde-3-phosphate dehydrogenase 2 (341 aa).

NAD(+) contacts are provided by residues 13–14 (RI), Asp-35, and Lys-85. D-glyceraldehyde 3-phosphate is bound by residues 157-159 (SCT), Thr-188, 217-218 (TG), and Arg-240. The active-site Nucleophile is Cys-158. An NAD(+)-binding site is contributed by Asn-322.

Belongs to the glyceraldehyde-3-phosphate dehydrogenase family. As to quaternary structure, homotetramer.

The protein localises to the cytoplasm. It catalyses the reaction D-glyceraldehyde 3-phosphate + phosphate + NAD(+) = (2R)-3-phospho-glyceroyl phosphate + NADH + H(+). It functions in the pathway carbohydrate degradation; glycolysis; pyruvate from D-glyceraldehyde 3-phosphate: step 1/5. The sequence is that of Glyceraldehyde-3-phosphate dehydrogenase 2 from Caenorhabditis briggsae.